Consider the following 633-residue polypeptide: Sodium- and chloride-dependent glycine transporter 1 (633 aa).

At 1–30 (MGLCVNGAVPSEATKKDENLKRGNWGNQIE) the chain is on the cytoplasmic side. Transmembrane regions (helical) follow at residues 31-51 (FVLT…FPYL), 58-78 (GAFM…LFFM), and 113-133 (YIGI…FASM). Over 134–208 (NRVLPWTYCN…ISEDIGDFGE (75 aa)) the chain is Extracellular. Residues N158, N164, N173, and N179 are each glycosylated (N-linked (GlcNAc...) asparagine). Helical transmembrane passes span 209-229 (VQLP…LCLI), 238-258 (VVYF…IRGI), 283-303 (VWGD…GGLI), 330-350 (SVYA…HLGV), 373-393 (LLPI…LLGL), 429-449 (IIGF…WLLL), 453-473 (YAAS…VMYI), 493-513 (LFFQ…ILIF), and 533-553 (ITIG…YAIF). Over 554–633 (KIWCSEGDTF…GQAHTQDSKV (80 aa)) the chain is Cytoplasmic. The tract at residues 588-633 (RYAQMSSTRSESNPEAQPLNPEKMKEDLSLTIQGSNGQAHTQDSKV) is disordered. 2 stretches are compositionally biased toward polar residues: residues 591-602 (QMSSTRSESNPE) and 617-633 (LTIQ…DSKV).

It belongs to the sodium:neurotransmitter symporter (SNF) (TC 2.A.22) family. SLC6A9 subfamily. As to expression, first expressed in early tailbud stage embryos in the midbrain and anterior spinal cord, and weakly in the hindbrain. By late tailbud stages, expression extends posteriorly in the spinal cord to appear in between somites. Expressed in the forebrain, retina, between the somites and in the blood islands by the swimming tadpole stages.

The protein localises to the cell membrane. It catalyses the reaction glycine(out) + chloride(out) + 2 Na(+)(out) = glycine(in) + chloride(in) + 2 Na(+)(in). In terms of biological role, sodium- and chloride-dependent glycine transporter which is essential for regulating glycine concentrations at inhibitory glycinergic synapses. This is Sodium- and chloride-dependent glycine transporter 1 from Xenopus laevis (African clawed frog).